We begin with the raw amino-acid sequence, 351 residues long: Glycerol-1-phosphate dehydrogenase [NAD(P)+] (351 aa).

NAD(+)-binding positions include 93 to 97 and 115 to 118; these read GKVLD and TTAS. A substrate-binding site is contributed by Asp120. Residue Ser124 coordinates NAD(+). Asp167 provides a ligand contact to substrate. Residues Asp167 and His247 each coordinate Zn(2+). Residue His251 coordinates substrate. His263 lines the Zn(2+) pocket.

The protein belongs to the glycerol-1-phosphate dehydrogenase family. It depends on Zn(2+) as a cofactor.

Its subcellular location is the cytoplasm. It carries out the reaction sn-glycerol 1-phosphate + NAD(+) = dihydroxyacetone phosphate + NADH + H(+). The enzyme catalyses sn-glycerol 1-phosphate + NADP(+) = dihydroxyacetone phosphate + NADPH + H(+). It functions in the pathway membrane lipid metabolism; glycerophospholipid metabolism. Catalyzes the NAD(P)H-dependent reduction of dihydroxyacetonephosphate (DHAP or glycerone phosphate) to glycerol 1-phosphate (G1P). The G1P thus generated is used as the glycerophosphate backbone of phospholipids in the cellular membranes of Archaea. The protein is Glycerol-1-phosphate dehydrogenase [NAD(P)+] of Archaeoglobus fulgidus (strain ATCC 49558 / DSM 4304 / JCM 9628 / NBRC 100126 / VC-16).